The sequence spans 406 residues: Putative nickel insertion protein (406 aa).

Belongs to the LarC family.

The polypeptide is Putative nickel insertion protein (Methanosphaera stadtmanae (strain ATCC 43021 / DSM 3091 / JCM 11832 / MCB-3)).